Reading from the N-terminus, the 255-residue chain is Ribonuclease PH (255 aa).

Phosphate contacts are provided by residues R86 and 124–126 (GTR).

Belongs to the RNase PH family. In terms of assembly, homohexameric ring arranged as a trimer of dimers.

The catalysed reaction is tRNA(n+1) + phosphate = tRNA(n) + a ribonucleoside 5'-diphosphate. Phosphorolytic 3'-5' exoribonuclease that plays an important role in tRNA 3'-end maturation. Removes nucleotide residues following the 3'-CCA terminus of tRNAs; can also add nucleotides to the ends of RNA molecules by using nucleoside diphosphates as substrates, but this may not be physiologically important. Probably plays a role in initiation of 16S rRNA degradation (leading to ribosome degradation) during starvation. The polypeptide is Ribonuclease PH (Geobacillus thermodenitrificans (strain NG80-2)).